The sequence spans 489 residues: Probable cytochrome P450 CYP44 (489 aa).

Residues 12-31 (VEKCPYSPTSSPNTPPRTFS) are disordered. The segment covering 16 to 29 (PYSPTSSPNTPPRT) has biased composition (low complexity). Residue Cys438 coordinates heme.

It belongs to the cytochrome P450 family. The cofactor is heme.

Functionally, cytochromes P450 are a group of heme-thiolate monooxygenases. They oxidize a variety of structurally unrelated compounds, including steroids, fatty acids, and xenobiotics. In Caenorhabditis elegans, this protein is Probable cytochrome P450 CYP44 (cyp-44A1).